A 1243-amino-acid polypeptide reads, in one-letter code: Interphotoreceptor matrix proteoglycan 2 (1243 aa).

A signal peptide spans 1 to 27; it reads MIMFLPVGRMSLGILILFLTGGNLVSA. The Extracellular portion of the chain corresponds to 28 to 1106; the sequence is SEERQEPMHA…EFVSEPFVIG (1079 aa). The interval 205 to 234 is disordered; that stretch reads GLASESSAASPQESISNEIENVTEEPTQPA. Residues 207–220 are compositionally biased toward low complexity; the sequence is ASESSAASPQESIS. The span at 221-230 shows a compositional bias: polar residues; sequence NEIENVTEEP. N-linked (GlcNAc...) asparagine glycosylation occurs at N225. The region spanning 235-349 is the SEA 1 domain; the sequence is AEQIAEFSIQ…KPTAVYTISN (115 aa). Residues 255–263 form a hyaluronan-binding motif involved in chondroitin sulfate A-binding region; it reads RDPSSALYR. N297, N316, and N366 each carry an N-linked (GlcNAc...) asparagine glycan. O-linked (GalNAc...) threonine glycosylation is found at T427, T428, and T429. N582 is a glycosylation site (N-linked (GlcNAc...) asparagine). O-linked (GalNAc...) threonine glycans are attached at residues T701, T704, and T712. Positions 748-762 are enriched in basic and acidic residues; that stretch reads EDMVHTESSSHKELD. The disordered stretch occupies residues 748–768; sequence EDMVHTESSSHKELDSEVPVS. Residues T817 and T888 are each glycosylated (O-linked (GalNAc...) threonine). Residues 900 to 1013 enclose the SEA 2 domain; the sequence is GALVVFFSLR…YSLDVESGDE (114 aa). 2 N-linked (GlcNAc...) asparagine glycosylation sites follow: N945 and N959. 2 EGF-like domains span residues 1013 to 1054 and 1055 to 1096; these read EANP…LPCQ and SLCD…QHCE. 6 disulfide bridges follow: C1017–C1028, C1022–C1039, C1041–C1053, C1057–C1070, C1064–C1080, and C1082–C1095. The hyaluronan-binding motif involved in chondroitin sulfate C-binding stretch occupies residues 1083–1091; sequence RVGSNWWYR. The helical transmembrane segment at 1107 to 1127 threads the bilayer; that stretch reads ITIASVVSFLLVASAVVFFLV. Residues 1128–1136 are hyaluronan-binding motif involved in chondroitin sulfate A- and C-binding; sequence KMLQAQNVR. Topologically, residues 1128 to 1243 are cytoplasmic; that stretch reads KMLQAQNVRR…FVREHQMEEL (116 aa). Residues 1139–1147 form a hyaluronan-binding motif involved in chondroitin sulfate C-binding region; sequence RQRPTSSSR. The tract at residues 1212-1220 is hyaluronan-binding motif involved in chondroitin sulfate A- and C-binding motif; it reads KEEIQERMR.

As to expression, expressed in the retina (at protein level). Expressed in the pineal gland.

It localises to the photoreceptor outer segment membrane. The protein localises to the photoreceptor inner segment membrane. The protein resides in the secreted. It is found in the extracellular space. Its subcellular location is the extracellular matrix. It localises to the interphotoreceptor matrix. In terms of biological role, chondroitin sulfate- and hyaluronan-binding proteoglycan involved in the organization of interphotoreceptor matrix; may participate in the maturation and maintenance of the light-sensitive photoreceptor outer segment. Binds heparin. This is Interphotoreceptor matrix proteoglycan 2 (Impg2) from Mus musculus (Mouse).